The chain runs to 107 residues: uncharacterized protein (107 aa).

Residues 1 to 32 are disordered; it reads MDSLASGRWRRRRTEELPAAGDAKRACRRSEP. The segment covering 22–31 has biased composition (basic and acidic residues); that stretch reads DAKRACRRSE.

This is an uncharacterized protein from Mus musculus (Mouse).